The sequence spans 304 residues: HTH-type transcriptional activator CmpR (304 aa).

The HTH lysR-type domain occupies 1–61 (MKNATLHQFE…EQIGRKIYLT (61 aa)). Positions 21-40 (FTKAAEELFLTQPTVSQQMK) form a DNA-binding region, H-T-H motif.

Belongs to the LysR transcriptional regulatory family.

It localises to the cytoplasm. In terms of biological role, activates transcription of the cmpABCD operon under carbon dioxide-limited conditions. Specifically binds to the cmpR-cmpA intergenic region. The chain is HTH-type transcriptional activator CmpR (cmpR) from Synechocystis sp. (strain ATCC 27184 / PCC 6803 / Kazusa).